Reading from the N-terminus, the 547-residue chain is ATP-dependent RNA helicase ROK1 (547 aa).

The Q motif signature appears at 111-139; that stretch reads DLITRFNLHPYLLANLKKNKYTDPTPIQC. The 183-residue stretch at 142–324 folds into the Helicase ATP-binding domain; the sequence is IPTMLNGRDL…NSIMSTDPLR (183 aa). 155–162 is a binding site for ATP; that stretch reads APTGSGKT. A DEAD box motif is present at residues 272-275; sequence DEAD. The 163-residue stretch at 336–498 folds into the Helicase C-terminal domain; the sequence is TVEQKLVYAG…EVPDWLNNLA (163 aa). A disordered region spans residues 511–547; that stretch reads RPIKRKKISTQHALANNKKKRAKQQMKGLKKMKKDDE. The span at 527-547 shows a compositional bias: basic residues; the sequence is NKKKRAKQQMKGLKKMKKDDE.

It belongs to the DEAD box helicase family. DDX52/ROK1 subfamily. Interacts with the U3 snoRNA and is associated with the 90S and 40S pre-ribosomes.

The protein localises to the nucleus. It localises to the nucleolus. The catalysed reaction is ATP + H2O = ADP + phosphate + H(+). Its function is as follows. ATP-dependent RNA helicase involved in 40S ribosomal subunit biogenesis. Required for the processing and cleavage of 35S pre-rRNA at sites A0, A1, and A2, leading to mature 18S rRNA. This is ATP-dependent RNA helicase ROK1 (ROK1) from Yarrowia lipolytica (strain CLIB 122 / E 150) (Yeast).